Consider the following 385-residue polypeptide: Succinate--CoA ligase [ADP-forming] subunit beta (385 aa).

The 236-residue stretch at 9–244 (KEVLRKYGVS…LDEEDPKEIE (236 aa)) folds into the ATP-grasp domain. ATP contacts are provided by residues Lys-46, 53-55 (GRG), Glu-99, Cys-102, and Glu-107. Residues Asn-199 and Asp-213 each contribute to the Mg(2+) site. Residues Asn-264 and 321–323 (GIM) contribute to the substrate site.

Belongs to the succinate/malate CoA ligase beta subunit family. Heterotetramer of two alpha and two beta subunits. Mg(2+) serves as cofactor.

The catalysed reaction is succinate + ATP + CoA = succinyl-CoA + ADP + phosphate. The enzyme catalyses GTP + succinate + CoA = succinyl-CoA + GDP + phosphate. The protein operates within carbohydrate metabolism; tricarboxylic acid cycle; succinate from succinyl-CoA (ligase route): step 1/1. Succinyl-CoA synthetase functions in the citric acid cycle (TCA), coupling the hydrolysis of succinyl-CoA to the synthesis of either ATP or GTP and thus represents the only step of substrate-level phosphorylation in the TCA. The beta subunit provides nucleotide specificity of the enzyme and binds the substrate succinate, while the binding sites for coenzyme A and phosphate are found in the alpha subunit. This chain is Succinate--CoA ligase [ADP-forming] subunit beta, found in Bacillus velezensis (strain DSM 23117 / BGSC 10A6 / LMG 26770 / FZB42) (Bacillus amyloliquefaciens subsp. plantarum).